The chain runs to 363 residues: UDP-N-acetylglucosamine--N-acetylmuramyl-(pentapeptide) pyrophosphoryl-undecaprenol N-acetylglucosamine transferase (363 aa).

UDP-N-acetyl-alpha-D-glucosamine-binding positions include 21-23 (TGG), N129, R170, S196, and Q290.

This sequence belongs to the glycosyltransferase 28 family. MurG subfamily.

The protein resides in the cell inner membrane. The catalysed reaction is di-trans,octa-cis-undecaprenyl diphospho-N-acetyl-alpha-D-muramoyl-L-alanyl-D-glutamyl-meso-2,6-diaminopimeloyl-D-alanyl-D-alanine + UDP-N-acetyl-alpha-D-glucosamine = di-trans,octa-cis-undecaprenyl diphospho-[N-acetyl-alpha-D-glucosaminyl-(1-&gt;4)]-N-acetyl-alpha-D-muramoyl-L-alanyl-D-glutamyl-meso-2,6-diaminopimeloyl-D-alanyl-D-alanine + UDP + H(+). The protein operates within cell wall biogenesis; peptidoglycan biosynthesis. Cell wall formation. Catalyzes the transfer of a GlcNAc subunit on undecaprenyl-pyrophosphoryl-MurNAc-pentapeptide (lipid intermediate I) to form undecaprenyl-pyrophosphoryl-MurNAc-(pentapeptide)GlcNAc (lipid intermediate II). This Synechococcus sp. (strain ATCC 27144 / PCC 6301 / SAUG 1402/1) (Anacystis nidulans) protein is UDP-N-acetylglucosamine--N-acetylmuramyl-(pentapeptide) pyrophosphoryl-undecaprenol N-acetylglucosamine transferase.